A 427-amino-acid polypeptide reads, in one-letter code: Serine--tRNA ligase (427 aa).

235-237 (TAE) lines the L-serine pocket. ATP is bound by residues 266-268 (RRE) and Val282. Glu289 is a binding site for L-serine. 353–356 (EASS) provides a ligand contact to ATP. Ser389 lines the L-serine pocket.

This sequence belongs to the class-II aminoacyl-tRNA synthetase family. Type-1 seryl-tRNA synthetase subfamily. In terms of assembly, homodimer. The tRNA molecule binds across the dimer.

It localises to the cytoplasm. The catalysed reaction is tRNA(Ser) + L-serine + ATP = L-seryl-tRNA(Ser) + AMP + diphosphate + H(+). It catalyses the reaction tRNA(Sec) + L-serine + ATP = L-seryl-tRNA(Sec) + AMP + diphosphate + H(+). It participates in aminoacyl-tRNA biosynthesis; selenocysteinyl-tRNA(Sec) biosynthesis; L-seryl-tRNA(Sec) from L-serine and tRNA(Sec): step 1/1. Its function is as follows. Catalyzes the attachment of serine to tRNA(Ser). Is also able to aminoacylate tRNA(Sec) with serine, to form the misacylated tRNA L-seryl-tRNA(Sec), which will be further converted into selenocysteinyl-tRNA(Sec). This is Serine--tRNA ligase from Chlorobium phaeobacteroides (strain BS1).